The primary structure comprises 657 residues: MSTNKSSIEKITLGSFLIALGVVYGDIGTSPLYVMKSIINGNGGLESITPDFILGVLSLIFWTMTLLTTIKYVLITLKADNKGEGGIFSLYTLIRRRAKWLIIPAMVGGSALLADGMLTPAVTVTSSIEGLKILPSFNDIFGNNQDIIIIIVLVILSFLFFIQHFGTEIIGKIFGPVMFIWFAFLAILGIVNLSGNLYLLKALSPHYAIKILFSPNNHLGFFILGGVFLSTTGAEALYSDLGHVGRKNIYLTWPLVKICLLLNYFGQAAWILSQKNNAKLYGIESLNPFFQMMPSWLLLFGVLISTLAAIIASQALISGSYTLVSEAIKLNLFPRLQCLYPSNSKGQIYMPAINRILWIACIAIVLYFRSSDNMEAAYGLSITVTMLMTSILLFNYLLKRKTPLPIALIILVFFSSLEFSFLISSAVKFEKGGFVSVLIALCILSIMYIWIKGHYIKMSLLDYIPIENYKNQLKELKNDVDRPKYATNLVYLTSSEKSKRIERKIMYSILDKRPKRADVYWFVNVIVTDEPYTSEYTVNTFGTDYMVKVQLKLGFRVNQKLNVFLRQIVCELINNGDIKVQNKKYTTLHNRNVGDFRFILINECLSSESKLESWNSIIIRSKLFIKKFTVSPAKWFGLESSEIEVENVPLILGSTRM.

The next 12 helical transmembrane spans lie at 15-35, 48-68, 100-120, 147-167, 173-193, 219-239, 251-271, 292-312, 348-368, 378-398, 403-423, and 431-451; these read SFLI…LYVM, ITPD…TLLT, WLII…MLTP, IIII…HFGT, IFGP…IVNL, LGFF…ALYS, LTWP…AAWI, MMPS…AIIA, IYMP…VLYF, YGLS…NYLL, PLPI…SFLI, and KGGF…YIWI.

This sequence belongs to the HAK/KUP transporter (TC 2.A.72) family.

Its subcellular location is the cell membrane. The enzyme catalyses K(+)(in) + H(+)(in) = K(+)(out) + H(+)(out). Functionally, transport of potassium into the cell. Likely operates as a K(+):H(+) symporter. The protein is Probable potassium transport system protein Kup of Clostridium perfringens (strain SM101 / Type A).